The sequence spans 97 residues: Aspartyl/glutamyl-tRNA(Asn/Gln) amidotransferase subunit C (97 aa).

The segment at 74-97 is disordered; the sequence is AEQALDQAPASQRDRFEVPRILGE. The span at 85–97 shows a compositional bias: basic and acidic residues; it reads QRDRFEVPRILGE.

The protein belongs to the GatC family. In terms of assembly, heterotrimer of A, B and C subunits.

It carries out the reaction L-glutamyl-tRNA(Gln) + L-glutamine + ATP + H2O = L-glutaminyl-tRNA(Gln) + L-glutamate + ADP + phosphate + H(+). It catalyses the reaction L-aspartyl-tRNA(Asn) + L-glutamine + ATP + H2O = L-asparaginyl-tRNA(Asn) + L-glutamate + ADP + phosphate + 2 H(+). In terms of biological role, allows the formation of correctly charged Asn-tRNA(Asn) or Gln-tRNA(Gln) through the transamidation of misacylated Asp-tRNA(Asn) or Glu-tRNA(Gln) in organisms which lack either or both of asparaginyl-tRNA or glutaminyl-tRNA synthetases. The reaction takes place in the presence of glutamine and ATP through an activated phospho-Asp-tRNA(Asn) or phospho-Glu-tRNA(Gln). The sequence is that of Aspartyl/glutamyl-tRNA(Asn/Gln) amidotransferase subunit C from Corynebacterium kroppenstedtii (strain DSM 44385 / JCM 11950 / CIP 105744 / CCUG 35717).